Here is a 64-residue protein sequence, read N- to C-terminus: DNA gyrase inhibitor YacG (64 aa).

4 residues coordinate Zn(2+): Cys10, Cys13, Cys29, and Cys33.

This sequence belongs to the DNA gyrase inhibitor YacG family. In terms of assembly, interacts with GyrB. The cofactor is Zn(2+).

In terms of biological role, inhibits all the catalytic activities of DNA gyrase by preventing its interaction with DNA. Acts by binding directly to the C-terminal domain of GyrB, which probably disrupts DNA binding by the gyrase. This is DNA gyrase inhibitor YacG from Pectobacterium carotovorum subsp. carotovorum (strain PC1).